A 478-amino-acid polypeptide reads, in one-letter code: Phosphomannomutase (478 aa).

Residues 30-46 traverse the membrane as a helical segment; it reads FTPEVCARFTISFLTVM. The Phosphoserine intermediate role is filled by S111. Positions 111, 245, 247, and 249 each coordinate Mg(2+). Residues 265–284 form a helical membrane-spanning segment; that stretch reads ILGLLCSLELAADAVAIPVS.

This sequence belongs to the phosphohexose mutase family. Requires Mg(2+) as cofactor.

It is found in the cell membrane. The catalysed reaction is alpha-D-mannose 1-phosphate = D-mannose 6-phosphate. It participates in nucleotide-sugar biosynthesis; GDP-alpha-D-mannose biosynthesis; alpha-D-mannose 1-phosphate from D-fructose 6-phosphate: step 2/2. Its pathway is bacterial outer membrane biogenesis; LPS O-antigen biosynthesis. In terms of biological role, involved in GDP-mannose biosynthesis which serves as the activated sugar nucleotide precursor for mannose residues in cell surface polysaccharides. This enzyme participates in synthesis of the LPS group C2 O antigen. The polypeptide is Phosphomannomutase (manB) (Salmonella muenchen).